Reading from the N-terminus, the 650-residue chain is Primary amine oxidase 1 (650 aa).

The first 19 residues, 1–19, serve as a signal peptide directing secretion; that stretch reads MNTSILAILFLIQCVFTLG. Residues N2, N34, N62, and N149 are each glycosylated (N-linked (GlcNAc...) asparagine). C155 and C176 are joined by a disulfide. N-linked (GlcNAc...) asparagine glycosylation is present at N235. 308-319 contacts substrate; the sequence is FMDIGEFGFGRS. Catalysis depends on D310, which acts as the Proton acceptor. A disulfide bridge connects residues C329 and C355. 395–400 contacts substrate; the sequence is LGNYDY. Catalysis depends on Y398, which acts as the Schiff-base intermediate with substrate; via topaquinone. A 2',4',5'-topaquinone modification is found at Y398. 2 residues coordinate Cu cation: H453 and H455. Mn(2+) contacts are provided by D462 and D464. An N-linked (GlcNAc...) asparagine glycan is attached at N486. Mn(2+) is bound by residues D607 and I608. Cu cation is bound at residue H618.

It belongs to the copper/topaquinone oxidase family. In terms of assembly, homodimer. L-topaquinone is required as a cofactor. The cofactor is Cu cation. It depends on Zn(2+) as a cofactor. Requires Mn(2+) as cofactor. In terms of processing, topaquinone (TPQ) is generated by copper-dependent autoxidation of a specific tyrosyl residue. In terms of tissue distribution, expressed in the vascular tissues at the division/differentiation transition zone.

It localises to the secreted. The enzyme catalyses a primary methyl amine + O2 + H2O = an aldehyde + H2O2 + NH4(+). Its activity is regulated as follows. Repressed by semi-carbazide, a specific and irreversible inhibitor of copper amine oxidases. Functionally, oxidizes preferentially the aliphatic diamine putrescine with production of the corresponding aldehyde, ammonia and hydrogen peroxide. May be involved in the regulation of developmental programmed cell death (PCD) in both vascular tissue and the root cap. Required for jasmonic acid-(MeJA) mediated early protoxylem differentiation associated with putrescine levels reduction and H(2)O(2) accumulation in roots. The protein is Primary amine oxidase 1 of Arabidopsis thaliana (Mouse-ear cress).